Here is a 302-residue protein sequence, read N- to C-terminus: MTRRNMGVHIAGIQLKNPVMTASGTFGSGREYSEFVDLNQLGAVVVKGVANEPWSGNPTPRIAETYGGMLNSVGLQNPGVEAFIKDDIQFLRQYDTKIIVNIAGRTVADYCKVTEKLGDADIDLIELNISCPNVKAGGVNFGTNPAMVEEVTKAVKKVARQPLIVKLTPNVTDIVEIAKAAVAGGADAISLINTLLGMAIDIHGRKPILANVVGGLSGPAIKPVALRMVYQVANAVQVPIIGMGGIATGEDAIAFMLAGATGVAVGTANFMNPRATMEVLEGIEDYMDQYNIEDIHEIIGKL.

Residues S23 and 47-48 (KG) each bind FMN. Residues K47 and 71–75 (NSVGL) each bind substrate. Positions 101 and 128 each coordinate FMN. Residue N128 participates in substrate binding. C131 functions as the Nucleophile in the catalytic mechanism. FMN-binding residues include K166 and I192. 193-194 (NT) is a substrate binding site. FMN-binding positions include G218, 244–245 (GG), and 266–267 (GT).

This sequence belongs to the dihydroorotate dehydrogenase family. Type 1 subfamily. Heterotetramer of 2 PyrK and 2 PyrD type B subunits. The cofactor is FMN.

It localises to the cytoplasm. It carries out the reaction (S)-dihydroorotate + NAD(+) = orotate + NADH + H(+). It participates in pyrimidine metabolism; UMP biosynthesis via de novo pathway; orotate from (S)-dihydroorotate (NAD(+) route): step 1/1. Functionally, catalyzes the conversion of dihydroorotate to orotate with NAD(+) as electron acceptor. The chain is Dihydroorotate dehydrogenase B (NAD(+)), catalytic subunit (pyrD) from Alkaliphilus oremlandii (strain OhILAs) (Clostridium oremlandii (strain OhILAs)).